The following is a 256-amino-acid chain: Probable aquaporin TIP-type alpha (256 aa).

Topologically, residues 1–24 (MATRRYSFGRTDEATHPDSMRASL) are cytoplasmic. Phosphoserine; by CPK is present on serine 7. The chain crosses the membrane as a helical span at residues 25–44 (AEFASTFIFVFAGEGSGLAL). Topologically, residues 45–57 (VKIYQDSAFSAGE) are vacuolar. The helical transmembrane segment at 58 to 77 (LLALALAHAFALFAAVSASM) threads the bilayer. At 78 to 102 (HVSGGHVNPAVSFGALIGGRISVIR) the chain is on the cytoplasmic side. The NPA 1 motif lies at 85–87 (NPA). The chain crosses the membrane as a helical span at residues 103 to 121 (AVYYWIAQLLGSIVAALVL). The Vacuolar segment spans residues 122 to 143 (RLVTNNMRPSGFHVSPGVGVGH). A helical transmembrane segment spans residues 144–164 (MFILEVVMTFGLMYTVYGTAI). At 165 to 169 (DPKRG) the chain is on the cytoplasmic side. The helical transmembrane segment at 170–189 (AVSYIAPLAIGLIVGANILV) threads the bilayer. Topologically, residues 190 to 216 (GGPFDGACMNPALAFGPSLVGWQWHQH) are vacuolar. Residues 199–201 (NPA) carry the NPA 2 motif. The helical transmembrane segment at 217–239 (WIFWVGPLLGAALAALVYEYAVI) threads the bilayer. The Cytoplasmic portion of the chain corresponds to 240–256 (PIEPPPHHHQPLATEDY).

It belongs to the MIP/aquaporin (TC 1.A.8) family. TIP (TC 1.A.8.10) subfamily. Post-translationally, phosphorylated by a tonoplast-bound calcium-dependent protein kinase. Found in all seed tissues that are alive at seed maturity, but not in tissues that lose viability during seed maturation.

It is found in the vacuole membrane. Its function is as follows. Channel protein in tonoplast. These proteins may allow the diffusion of amino acids and/or peptides from the vacuolar compartment to the cytoplasm. The polypeptide is Probable aquaporin TIP-type alpha (Phaseolus vulgaris (Kidney bean)).